The sequence spans 67 residues: Sperm protamine P1 (67 aa).

The interval 1–67 is disordered; that stretch reads MASYRNSRSR…RRRKRNNENK (67 aa). 2 stretches are compositionally biased toward basic residues: residues 7-25 and 34-67; these read SRSRSRSRFRRRRGRRSRV and RSSRRRRRGKGRAHSGKKGRRSGSRRRKRNNENK.

The protein belongs to the protamine P1 family. Testis.

The protein resides in the nucleus. The protein localises to the chromosome. Functionally, protamines substitute for histones in the chromatin of sperm during the haploid phase of spermatogenesis. They compact sperm DNA into a highly condensed, stable and inactive complex. This chain is Sperm protamine P1 (PRM1), found in Isoodon macrourus (Short-nosed bandicoot).